Reading from the N-terminus, the 334-residue chain is Holliday junction branch migration complex subunit RuvB (334 aa).

The large ATPase domain (RuvB-L) stretch occupies residues A4–Y184. Residues R24, G65, K68, T69, T70, E131–Y133, R174, Y184, and R221 contribute to the ATP site. T69 lines the Mg(2+) pocket. The small ATPAse domain (RuvB-S) stretch occupies residues N185–D255. The tract at residues N258 to E334 is head domain (RuvB-H). Residues R294, R313, and R318 each coordinate DNA.

The protein belongs to the RuvB family. In terms of assembly, homohexamer. Forms an RuvA(8)-RuvB(12)-Holliday junction (HJ) complex. HJ DNA is sandwiched between 2 RuvA tetramers; dsDNA enters through RuvA and exits via RuvB. An RuvB hexamer assembles on each DNA strand where it exits the tetramer. Each RuvB hexamer is contacted by two RuvA subunits (via domain III) on 2 adjacent RuvB subunits; this complex drives branch migration. In the full resolvosome a probable DNA-RuvA(4)-RuvB(12)-RuvC(2) complex forms which resolves the HJ.

Its subcellular location is the cytoplasm. The catalysed reaction is ATP + H2O = ADP + phosphate + H(+). Its function is as follows. The RuvA-RuvB-RuvC complex processes Holliday junction (HJ) DNA during genetic recombination and DNA repair, while the RuvA-RuvB complex plays an important role in the rescue of blocked DNA replication forks via replication fork reversal (RFR). RuvA specifically binds to HJ cruciform DNA, conferring on it an open structure. The RuvB hexamer acts as an ATP-dependent pump, pulling dsDNA into and through the RuvAB complex. RuvB forms 2 homohexamers on either side of HJ DNA bound by 1 or 2 RuvA tetramers; 4 subunits per hexamer contact DNA at a time. Coordinated motions by a converter formed by DNA-disengaged RuvB subunits stimulates ATP hydrolysis and nucleotide exchange. Immobilization of the converter enables RuvB to convert the ATP-contained energy into a lever motion, pulling 2 nucleotides of DNA out of the RuvA tetramer per ATP hydrolyzed, thus driving DNA branch migration. The RuvB motors rotate together with the DNA substrate, which together with the progressing nucleotide cycle form the mechanistic basis for DNA recombination by continuous HJ branch migration. Branch migration allows RuvC to scan DNA until it finds its consensus sequence, where it cleaves and resolves cruciform DNA. This Shewanella sp. (strain W3-18-1) protein is Holliday junction branch migration complex subunit RuvB.